We begin with the raw amino-acid sequence, 459 residues long: Argininosuccinate lyase (459 aa).

The protein belongs to the lyase 1 family. Argininosuccinate lyase subfamily.

The protein localises to the cytoplasm. The enzyme catalyses 2-(N(omega)-L-arginino)succinate = fumarate + L-arginine. It functions in the pathway amino-acid biosynthesis; L-arginine biosynthesis; L-arginine from L-ornithine and carbamoyl phosphate: step 3/3. In Staphylococcus aureus (strain USA300), this protein is Argininosuccinate lyase.